A 490-amino-acid polypeptide reads, in one-letter code: Polyamine oxidase 2 (490 aa).

E57, R65, V246, and E433 together coordinate FAD. The Microbody targeting signal motif lies at 488-490; sequence SRL.

It belongs to the flavin monoamine oxidase family. Requires FAD as cofactor. Highly expressed in flowers and siliques. Also found in leaf and stem and in low levels in cotyledons, roots and in seedlings.

The protein localises to the peroxisome. The enzyme catalyses spermine + O2 + H2O = 3-aminopropanal + spermidine + H2O2. It catalyses the reaction N(1)-acetylspermine + O2 + H2O = 3-acetamidopropanal + spermidine + H2O2. The catalysed reaction is spermidine + O2 + H2O = 3-aminopropanal + putrescine + H2O2. It functions in the pathway amine and polyamine degradation; spermine degradation. Its pathway is amine and polyamine degradation; spermidine degradation. Its function is as follows. Flavoenzyme involved in polyamine back-conversion. Catalyzes the oxidation of the secondary amino group of polyamines, such as spermine, spermidine and their acetyl derivatives. Substrate preference is N(1)-acetylspermine &gt; spermine &gt; spermidine. Plays an important role in the regulation of polyamine intracellular concentration. Involved in abscisic acid-mediated developmental processes. May contribute to nitric oxide-mediated effects on root growth. The protein is Polyamine oxidase 2 of Arabidopsis thaliana (Mouse-ear cress).